The following is a 301-amino-acid chain: MEKRALVTAISLSMSLLALMLLVTAIFTDHWYETDTRRHKENCDQYGSESNDQKNREMPIYHLPLVDSGNAKRNLALMKPIHVGSREEELLENWRAILGMGILETECGRPLFSTYSGLWRKCYFQGMDRDIDKLILKGIAERCTSVKYHFSQPIRLRNIPLNLTRTIQQDEWHLLHLRRITAGFLGMAAAVMLCGSIVAAVGFFWEESLTQHVSGLLFLMAGIFCTISLCTYAASVSYDLSRNPPFIYGLPSDVDHGYGWSIFCAWVSLGLTVASGCICTTYPFLSRTKALRSKTARESSV.

A signal peptide spans 1–25 (MEKRALVTAISLSMSLLALMLLVTA). Residues 26–183 (IFTDHWYETD…LLHLRRITAG (158 aa)) lie on the Extracellular side of the membrane. Asn162 carries an N-linked (GlcNAc...) asparagine glycan. A helical transmembrane segment spans residues 184 to 204 (FLGMAAAVMLCGSIVAAVGFF). Residues 205-215 (WEESLTQHVSG) are Cytoplasmic-facing. The chain crosses the membrane as a helical span at residues 216-236 (LLFLMAGIFCTISLCTYAASV). Over 237–258 (SYDLSRNPPFIYGLPSDVDHGY) the chain is Extracellular. Residues 259 to 279 (GWSIFCAWVSLGLTVASGCIC) traverse the membrane as a helical segment. At 280–301 (TTYPFLSRTKALRSKTARESSV) the chain is on the cytoplasmic side.

Belongs to the TMEM178 family.

The protein resides in the endoplasmic reticulum membrane. Functionally, may act as a negative regulator of osteoclast differentiation. This is Transmembrane protein 178A (tmem178a) from Danio rerio (Zebrafish).